The sequence spans 298 residues: Oxygen-dependent coproporphyrinogen-III oxidase (298 aa).

Serine 92 contributes to the substrate binding site. A divalent metal cation contacts are provided by histidine 96 and histidine 106. Histidine 106 functions as the Proton donor in the catalytic mechanism. 108–110 (NVR) is a substrate binding site. Positions 145 and 175 each coordinate a divalent metal cation. The tract at residues 239 to 274 (YVEFNLVYDRGTLFGLQSGGRSESILMSLPPRVRWE) is important for dimerization. 257 to 259 (GGR) is a substrate binding site.

The protein belongs to the aerobic coproporphyrinogen-III oxidase family. In terms of assembly, homodimer. It depends on a divalent metal cation as a cofactor.

It is found in the cytoplasm. The enzyme catalyses coproporphyrinogen III + O2 + 2 H(+) = protoporphyrinogen IX + 2 CO2 + 2 H2O. The protein operates within porphyrin-containing compound metabolism; protoporphyrin-IX biosynthesis; protoporphyrinogen-IX from coproporphyrinogen-III (O2 route): step 1/1. Functionally, involved in the heme biosynthesis. Catalyzes the aerobic oxidative decarboxylation of propionate groups of rings A and B of coproporphyrinogen-III to yield the vinyl groups in protoporphyrinogen-IX. The chain is Oxygen-dependent coproporphyrinogen-III oxidase from Stenotrophomonas maltophilia (strain K279a).